The sequence spans 196 residues: SAGA-associated factor 11 homolog (196 aa).

Positions 1–22 (MSAANMPTTTGAQGSGNQVPTT) are disordered. The SGF11-type zinc finger occupies 106 to 127 (CTCPNCDRLVAAARFAPHLEKC). The segment at 144 to 196 (TKEGATSAHLHSAGNTGGTDDEDDVDWSSDKRRKKSNQNSRNNGSKKNNGKSF) is disordered. S172 is subject to Phosphoserine. The segment covering 180–196 (NQNSRNNGSKKNNGKSF) has biased composition (low complexity).

This sequence belongs to the SGF11 family. Component of some SAGA transcription coactivator-HAT complexes, at least composed of Ada2b, not/nonstop, Pcaf/Gcn5, Sgf11 and Spt3. Within the SAGA complex, Sgf11, e(y)2, and not/nonstop form an additional subcomplex of SAGA called the DUB module (deubiquitination module). Interacts directly with not/nonstop. Interacts with the AMEX complex component xmas-2. Interacts with Cbp80; important for promoter recruitment of Sgf11 that is not associated with the DUB module.

It localises to the nucleus. The protein localises to the nucleoplasm. Its subcellular location is the cytoplasm. Component of the transcription regulatory histone acetylation (HAT) complex SAGA, a multiprotein complex that activates transcription by remodeling chromatin and mediating histone acetylation and deubiquitination. Within the SAGA complex, participates in a subcomplex that specifically deubiquitinates histone H2B. The SAGA complex is recruited to specific gene promoters by activators, where it is required for transcription. Required for nuclear receptor-mediated transactivation. Binds independently on SAGA to promoters in an RNA-dependent manner. Binds to mRNA and is essential for total mRNA export from the nucleus. Required to counteract heterochromatin silencing. Controls the development of neuronal connectivity in visual system by being required for accurate axon targeting in the optic lobe. Required for expression of ecdysone-induced genes such as br/broad. This Drosophila erecta (Fruit fly) protein is SAGA-associated factor 11 homolog.